The sequence spans 792 residues: Endonuclease MutS2 (792 aa).

An ATP-binding site is contributed by 344–351; the sequence is GPNTGGKT. The Smr domain occupies 716 to 791; the sequence is IHLRGLHVEE…GLGVTVVYLE (76 aa).

Belongs to the DNA mismatch repair MutS family. MutS2 subfamily. In terms of assembly, homodimer. Binds to stalled ribosomes, contacting rRNA.

In terms of biological role, endonuclease that is involved in the suppression of homologous recombination and thus may have a key role in the control of bacterial genetic diversity. Functionally, acts as a ribosome collision sensor, splitting the ribosome into its 2 subunits. Detects stalled/collided 70S ribosomes which it binds and splits by an ATP-hydrolysis driven conformational change. Acts upstream of the ribosome quality control system (RQC), a ribosome-associated complex that mediates the extraction of incompletely synthesized nascent chains from stalled ribosomes and their subsequent degradation. Probably generates substrates for RQC. The protein is Endonuclease MutS2 of Thermomicrobium roseum (strain ATCC 27502 / DSM 5159 / P-2).